Reading from the N-terminus, the 663-residue chain is Protein associated with UVRAG as autophagy enhancer (663 aa).

Disordered regions lie at residues Met1 to Glu36 and Asp65 to Ala136. Polar residues-rich tracts occupy residues Thr80 to Leu93 and Pro105 to Thr130. Positions Glu196–Glu235 are interaction with UVRAG. An N6-acetyllysine mark is found at Lys484, Lys534, Lys574, and Lys634.

In terms of assembly, interacts with UVRAG; the interaction is direct and promotes association with the PI3K/PI3KC3 and HOPS complexes. Interacts with STX17. In terms of processing, acetylated by KAT5/TIP60 under autophagy induction, promoting autophagosome maturation and lipid metabolism. Lys-484 and Lys-574 constitute the key sites for tuning function in autophagy.

It localises to the cytoplasmic vesicle. The protein resides in the autophagosome membrane. Its function is as follows. Regulator of autophagy that promotes autophagosome maturation by facilitating the biogenesis of phosphatidylinositol 3-phosphate (PtdIns(3)P) in late steps of autophagy. Acts by antagonizing RUBCN, thereby stimulating phosphatidylinositol 3-kinase activity of the PI3K/PI3KC3 complex. Following anchorage to the autophagosomal SNARE STX17, promotes the recruitment of PI3K/PI3KC3 and HOPS complexes to the autophagosome to regulate the fusion specificity of autophagosomes with late endosomes/lysosomes. Binds phosphoinositides phosphatidylinositol 3-phosphate (PtdIns(3)P), 4-phosphate (PtdIns(4)P) and 5-phosphate (PtdIns(5)P). In addition to its role in autophagy, acts as a regulator of lipid and glycogen homeostasis. May act as a tumor suppressor. This Bos taurus (Bovine) protein is Protein associated with UVRAG as autophagy enhancer.